Reading from the N-terminus, the 709-residue chain is Fatty acid oxidation complex subunit alpha (709 aa).

The interval 1–188 (MEKTFNLTRR…KMGLVNDVVP (188 aa)) is enoyl-CoA hydratase. The interval 308–709 (RKVKKAVILG…AMAAEKARFF (402 aa)) is 3-hydroxyacyl-CoA dehydrogenase.

In the N-terminal section; belongs to the enoyl-CoA hydratase/isomerase family. This sequence in the central section; belongs to the 3-hydroxyacyl-CoA dehydrogenase family. As to quaternary structure, heterotetramer of two alpha chains (FadJ) and two beta chains (FadI).

The protein localises to the cytoplasm. It catalyses the reaction a (3S)-3-hydroxyacyl-CoA = a (2E)-enoyl-CoA + H2O. The enzyme catalyses a 4-saturated-(3S)-3-hydroxyacyl-CoA = a (3E)-enoyl-CoA + H2O. The catalysed reaction is a (3S)-3-hydroxyacyl-CoA + NAD(+) = a 3-oxoacyl-CoA + NADH + H(+). It carries out the reaction (3S)-3-hydroxybutanoyl-CoA = (3R)-3-hydroxybutanoyl-CoA. The protein operates within lipid metabolism; fatty acid beta-oxidation. In terms of biological role, catalyzes the formation of a hydroxyacyl-CoA by addition of water on enoyl-CoA. Also exhibits 3-hydroxyacyl-CoA epimerase and 3-hydroxyacyl-CoA dehydrogenase activities. The chain is Fatty acid oxidation complex subunit alpha from Shewanella sp. (strain ANA-3).